The following is a 135-amino-acid chain: Small ribosomal subunit protein uS11 (135 aa).

The segment at 1–20 is disordered; it reads MGRQRQQRSRGSRSRRRVRK.

Belongs to the universal ribosomal protein uS11 family. Part of the 30S ribosomal subunit. Interacts with proteins S7 and S18. Binds to IF-3.

In terms of biological role, located on the platform of the 30S subunit, it bridges several disparate RNA helices of the 16S rRNA. Forms part of the Shine-Dalgarno cleft in the 70S ribosome. This Rubrobacter xylanophilus (strain DSM 9941 / JCM 11954 / NBRC 16129 / PRD-1) protein is Small ribosomal subunit protein uS11.